A 441-amino-acid chain; its full sequence is Ribosomal protein uS12 methylthiotransferase RimO (441 aa).

One can recognise an MTTase N-terminal domain in the interval 7–117 (PKVSFVSLGC…VLDAVHRALP (111 aa)). Residues cysteine 16, cysteine 52, cysteine 81, cysteine 148, cysteine 152, and cysteine 155 each contribute to the [4Fe-4S] cluster site. The Radical SAM core domain occupies 134 to 371 (LTPRHYAYLK…MARQQKISAR (238 aa)). Residues 374–440 (KRKVGTRQQV…AYDLHGSVAG (67 aa)) enclose the TRAM domain.

It belongs to the methylthiotransferase family. RimO subfamily. [4Fe-4S] cluster serves as cofactor.

It is found in the cytoplasm. The enzyme catalyses L-aspartate(89)-[ribosomal protein uS12]-hydrogen + (sulfur carrier)-SH + AH2 + 2 S-adenosyl-L-methionine = 3-methylsulfanyl-L-aspartate(89)-[ribosomal protein uS12]-hydrogen + (sulfur carrier)-H + 5'-deoxyadenosine + L-methionine + A + S-adenosyl-L-homocysteine + 2 H(+). Catalyzes the methylthiolation of an aspartic acid residue of ribosomal protein uS12. This Rhodopseudomonas palustris (strain BisB18) protein is Ribosomal protein uS12 methylthiotransferase RimO.